A 358-amino-acid polypeptide reads, in one-letter code: Photosystem II protein D1 2 (358 aa).

A run of 3 helical transmembrane segments spans residues 28 to 45 (YVGWFGVLMIPCLLAATI), 117 to 132 (HFLIGISAYMGRQWEL), and 141 to 155 (WICVAYAAPLSAAMV). His-117 contacts chlorophyll a. Residue Tyr-125 participates in pheophytin a binding. Asp-169 and Glu-188 together coordinate [CaMn4O5] cluster. The helical transmembrane segment at 196–217 (FHMLGVAGVFGGSLFSAMHGSL) threads the bilayer. Position 197 (His-197) interacts with chlorophyll a. Residues His-214 and 263 to 264 (SF) contribute to the a quinone site. His-214 contributes to the Fe cation binding site. His-271 contacts Fe cation. The chain crosses the membrane as a helical span at residues 273-287 (FLAAWPVVGIWFTSM). Positions 331, 332, 341, and 343 each coordinate [CaMn4O5] cluster. Positions 344 to 358 (TTESAPVALQAPAVG) are excised as a propeptide.

This sequence belongs to the reaction center PufL/M/PsbA/D family. In terms of assembly, PSII is composed of 1 copy each of membrane proteins PsbA, PsbB, PsbC, PsbD, PsbE, PsbF, PsbH, PsbI, PsbJ, PsbK, PsbL, PsbM, PsbT, PsbX, PsbY, PsbZ, Psb30/Ycf12, peripheral proteins PsbO, CyanoQ (PsbQ), PsbU, PsbV and a large number of cofactors. It forms dimeric complexes. The D1/D2 heterodimer binds P680, chlorophylls that are the primary electron donor of PSII, and subsequent electron acceptors. It shares a non-heme iron and each subunit binds pheophytin, quinone, additional chlorophylls, carotenoids and lipids. D1 provides most of the ligands for the Mn4-Ca-O5 cluster of the oxygen-evolving complex (OEC). There is also a Cl(-1) ion associated with D1 and D2, which is required for oxygen evolution. The PSII complex binds additional chlorophylls, carotenoids and specific lipids. is required as a cofactor. Tyr-160 forms a radical intermediate that is referred to as redox-active TyrZ, YZ or Y-Z. In terms of processing, C-terminally processed by CtpA; processing is essential to allow assembly of the oxygen-evolving complex and thus photosynthetic growth.

It localises to the cellular thylakoid membrane. It catalyses the reaction 2 a plastoquinone + 4 hnu + 2 H2O = 2 a plastoquinol + O2. In terms of biological role, photosystem II (PSII) is a light-driven water:plastoquinone oxidoreductase that uses light energy to abstract electrons from H(2)O, generating O(2) and a proton gradient subsequently used for ATP formation. It consists of a core antenna complex that captures photons, and an electron transfer chain that converts photonic excitation into a charge separation. The D1/D2 (PsbA/PsbD) reaction center heterodimer binds P680, the primary electron donor of PSII as well as several subsequent electron acceptors. This chain is Photosystem II protein D1 2, found in Synechococcus sp. (strain RCC307).